Here is a 139-residue protein sequence, read N- to C-terminus: D-ribose pyranase (139 aa).

His-20 acts as the Proton donor in catalysis. Substrate is bound by residues Asp-28, His-106, and Tyr-128–Asn-130.

Belongs to the RbsD / FucU family. RbsD subfamily. Homodecamer.

Its subcellular location is the cytoplasm. The enzyme catalyses beta-D-ribopyranose = beta-D-ribofuranose. Its pathway is carbohydrate metabolism; D-ribose degradation; D-ribose 5-phosphate from beta-D-ribopyranose: step 1/2. Its function is as follows. Catalyzes the interconversion of beta-pyran and beta-furan forms of D-ribose. The protein is D-ribose pyranase of Escherichia coli O81 (strain ED1a).